Consider the following 618-residue polypeptide: Uptake hydrogenase large subunit (618 aa).

Ni(2+) is bound by residues cysteine 75, cysteine 78, cysteine 597, and cysteine 600.

It belongs to the [NiFe]/[NiFeSe] hydrogenase large subunit family. Heterodimer of a large and a small subunit. Ni(2+) is required as a cofactor.

It is found in the cell membrane. It carries out the reaction H2 + A = AH2. This enzyme recycles the H(2) produced by nitrogenase to increase the production of ATP and to protect nitrogenase against inhibition or damage by O(2) under carbon- or phosphate-limited conditions. This chain is Uptake hydrogenase large subunit (hupB), found in Rubrivivax gelatinosus (Rhodocyclus gelatinosus).